The chain runs to 538 residues: Retinoblastoma-binding protein 5 (538 aa).

2 WD repeats span residues 22-63 (DCIS…KIIS) and 64-103 (AHIH…CDQR). Lys-129 participates in a covalent cross-link: Glycyl lysine isopeptide (Lys-Gly) (interchain with G-Cter in SUMO2). WD repeat units follow at residues 148-188 (DDDS…LVAS), 196-235 (SNTT…TCGR), 249-291 (VNRT…KILH), and 293-331 (TRGE…NWSA). Residue Thr-252 is modified to Phosphothreonine; by CDK1. The interaction with ASH2L stretch occupies residues 330–366 (SAFAPDFKELDENVEYEERESEFDIEDEDKSEPEQTG). Positions 344-360 (EYEERESEFDIEDEDKS) are enriched in acidic residues. A disordered region spans residues 344 to 377 (EYEERESEFDIEDEDKSEPEQTGADAAEDEEVDV). Position 350 is a phosphoserine (Ser-350). Positions 371–380 (EDEEVDVTSV) are interaction with WDR5. Ser-388 and Ser-389 each carry phosphoserine. The segment at 408–519 (VEDPEENPYG…LPLEGSTKGK (112 aa)) is disordered. The segment covering 479 to 490 (SKKKQAGRPKGS) has biased composition (basic residues). Basic and acidic residues predominate over residues 491-510 (KGKEKDSPFKPKLYKGDRGL). Ser-497 carries the phosphoserine; by CDK1 modification. Residue Ser-525 is modified to Phosphoserine.

As to quaternary structure, component of the SET1 complex, at least composed of the catalytic subunit (SETD1A or SETD1B), WDR5, WDR82, RBBP5, ASH2L/ASH2, CXXC1/CFP1, HCFC1 and DPY30. Core component of several methyltransferase-containing complexes including MLL1/MLL, MLL2/3 (also named ASCOM complex) and MLL4/WBP7. Each complex is at least composed of ASH2L, RBBP5, WDR5, DPY30, one or more specific histone methyltransferases (KMT2A/MLL1, KMT2D/MLL2, KMT2C/MLL3 and KMT2B/MLL4), and the facultative components PAGR1, BACC1, CHD8, E2F6, HCFC1, HCFC2, HSP70, INO80C, KDM6A, KANSL1, LAS1L, MAX, MCRS1, MEN1, MGA, MYST1/MOF, NCOA6, PAXIP1/PTIP, PELP1, PHF20, PRP31, RING2, RUVB1/TIP49A, RUVB2/TIP49B, SENP3, TAF1, TAF4, TAF6, TAF7, TAF9, TEX10 and alpha- and beta-tubulin. Component of a histone methylation complex composed of at least ZNF335, RBBP5, ASH2L and WDR5; the complex may have histone H3-specific methyltransferase activity, however does not have specificity for 'Lys-4' of histone H3. Interacts with ZNF335. Interacts with ASH2L; the interaction is direct. Interacts with WDR5; the interaction is direct. Components of the ZNF335-RBBP5-ASH2L-WDR5 histone methylation complex may associate with components of a nuclear receptor-mediated transcription complex to form a complex at least composed of ZNF335, HCFC1, CCAR2, EMSY, MKI67, RBBP5, ASH2L and WDR5. Within this complex interacts with EMSY. Found in a complex with RBBP5, ASH2L, DPY30, KMT2A, KMT2D and WDR5. Interacts with SETD1A. Interacts with WDR82.

It localises to the nucleus. Functionally, in embryonic stem (ES) cells, plays a crucial role in the differentiation potential, particularly along the neural lineage, regulating gene induction and H3 'Lys-4' methylation at key developmental loci, including that mediated by retinoic acid. Does not affect ES cell self-renewal. Component or associated component of some histone methyltransferase complexes which regulates transcription through recruitment of those complexes to gene promoters. As part of the MLL1/MLL complex, involved in mono-, di- and trimethylation at 'Lys-4' of histone H3. Histone H3 'Lys-4' methylation represents a specific tag for epigenetic transcriptional activation. In association with ASH2L and WDR5, stimulates the histone methyltransferase activities of KMT2A, KMT2B, KMT2C, KMT2D, SETD1A and SETD1B. This chain is Retinoblastoma-binding protein 5 (Rbbp5), found in Mus musculus (Mouse).